The chain runs to 42 residues: Potassium channel toxin gamma-KTx 3.4 (42 aa).

4 cysteine pairs are disulfide-bonded: cysteine 5/cysteine 23, cysteine 11/cysteine 34, cysteine 20/cysteine 39, and cysteine 24/cysteine 41.

The protein belongs to the ergtoxin family. Gamma-KTx 3 subfamily. In terms of tissue distribution, expressed by the venom gland.

It is found in the secreted. Its function is as follows. Blocks Kv11/ERG potassium channels. The protein is Potassium channel toxin gamma-KTx 3.4 of Centruroides gracilis (Slenderbrown scorpion).